Reading from the N-terminus, the 291-residue chain is 2-C-methyl-D-erythritol 4-phosphate cytidylyltransferase (291 aa).

Positions 1–23 (MTERDFDTPVETPTVQPAPAQGA) are disordered.

Belongs to the IspD/TarI cytidylyltransferase family. IspD subfamily.

It catalyses the reaction 2-C-methyl-D-erythritol 4-phosphate + CTP + H(+) = 4-CDP-2-C-methyl-D-erythritol + diphosphate. It functions in the pathway isoprenoid biosynthesis; isopentenyl diphosphate biosynthesis via DXP pathway; isopentenyl diphosphate from 1-deoxy-D-xylulose 5-phosphate: step 2/6. Catalyzes the formation of 4-diphosphocytidyl-2-C-methyl-D-erythritol from CTP and 2-C-methyl-D-erythritol 4-phosphate (MEP). This Bifidobacterium longum (strain DJO10A) protein is 2-C-methyl-D-erythritol 4-phosphate cytidylyltransferase.